The following is a 199-amino-acid chain: ATP-dependent Clp protease proteolytic subunit 2 (199 aa).

Catalysis depends on Ser95, which acts as the Nucleophile. Residue His120 is part of the active site.

The protein belongs to the peptidase S14 family. Fourteen ClpP subunits assemble into 2 heptameric rings which stack back to back to give a disk-like structure with a central cavity, resembling the structure of eukaryotic proteasomes.

Its subcellular location is the cytoplasm. The catalysed reaction is Hydrolysis of proteins to small peptides in the presence of ATP and magnesium. alpha-casein is the usual test substrate. In the absence of ATP, only oligopeptides shorter than five residues are hydrolyzed (such as succinyl-Leu-Tyr-|-NHMec, and Leu-Tyr-Leu-|-Tyr-Trp, in which cleavage of the -Tyr-|-Leu- and -Tyr-|-Trp bonds also occurs).. Functionally, cleaves peptides in various proteins in a process that requires ATP hydrolysis. Has a chymotrypsin-like activity. Plays a major role in the degradation of misfolded proteins. This is ATP-dependent Clp protease proteolytic subunit 2 from Mycolicibacterium paratuberculosis (strain ATCC BAA-968 / K-10) (Mycobacterium paratuberculosis).